Reading from the N-terminus, the 375-residue chain is Terpene cyclase braA (375 aa).

The Mg(2+) site is built by Asp116, Asn264, and Ser268. The short motif at 116 to 120 (DDEID) is the D(D/E)XX(D/E) motif element. The NSE motif signature appears at 264–272 (NDVLSLQKE). The short motif at 348-355 (WSYSCERY) is the WxxxxxRY motif element. (2E,6E)-farnesyl diphosphate-binding residues include Arg354 and Tyr355.

The protein belongs to the terpene synthase family. As to quaternary structure, homodimer. It depends on Mg(2+) as a cofactor.

It catalyses the reaction (2E,6E)-farnesyl diphosphate + H2O = trichobrasilenol + diphosphate. The protein operates within secondary metabolite biosynthesis. Functionally, terpene cyclase; part of the gene cluster that mediates the biosynthesis of the brasilane terpene glycosides brasilane D and E. The biosynthesis starts with the activity of the terpene cyclase braA that converts farnesyl pyrophosphate into the sesquiterpene alcohol trichobrasilenol. Subsequently, trichobrasilenol is glycosylated by the O-glycosyltransferase braB putatively using UDP-GlcNAc as sugar donor to yield brasilane A. The latter then undergoes two rounds of oxidation performed by the cytochrome P450 monooxygenase braC. In the first round braC hydroxylates C-12 forming brasilane D, which serves as substrate in the second round to establish the epoxide at the bond between C-5 and C-10 and oxidize the alcohol at C-12 to an aldehyde leading to the final product brasilane E. This is Terpene cyclase braA from Annulohypoxylon truncatum (Hypoxylon truncatum).